Reading from the N-terminus, the 82-residue chain is Small ribosomal subunit protein eS21 (82 aa).

It belongs to the eukaryotic ribosomal protein eS21 family.

The sequence is that of Small ribosomal subunit protein eS21 (RPS21) from Oryza sativa subsp. japonica (Rice).